A 239-amino-acid polypeptide reads, in one-letter code: Norbelladine 4'-O-methyltransferase 3 (239 aa).

Residues Val55, Glu77, 79-80 (GV), Ser85, Asp103, and Ala132 contribute to the S-adenosyl-L-methionine site. Residue Asp155 participates in a divalent metal cation binding. Asp157 is a binding site for S-adenosyl-L-methionine. Residues Asp181 and Asn182 each coordinate a divalent metal cation.

It belongs to the class I-like SAM-binding methyltransferase superfamily. Cation-dependent O-methyltransferase family. It depends on Mg(2+) as a cofactor.

It carries out the reaction norbelladine + S-adenosyl-L-methionine = 4'-O-methylnorbelladine + S-adenosyl-L-homocysteine + H(+). It participates in alkaloid biosynthesis. 4'-O-methyltransferase converting norbelladine to 4'-O-methylnorbelladine. 4'-O-methylnorbelladine is a precursor to all Amaryllidaceae alkaloids such as galanthamine, lycorine and haemanthamine, and including haemanthamine- and crinamine-type alkaloids, promising anticancer agents. This chain is Norbelladine 4'-O-methyltransferase 3, found in Narcissus aff. pseudonarcissus MK-2014 (Daffodil).